A 228-amino-acid chain; its full sequence is MGQKVHPVGIRLGIVKDHTSVWYADGRNYADYLNADLKVRAYLQDKLKSASVSRIDIARPAQTARITIHTARPGIVIGKKGEDVEKLRQDLTKQMGVPVHINIEEIRKPELDGMLVAQSVAQQLERRVMFRRAMKRAVQNAMRIGAKGIKIQVSGRLGGAEIARTEWYREGRVPLHTLRADIDYATYEAHTTYGVIGVKVWIFKGEVIGGRTEELKPQAPAPRKAAKK.

The region spanning 39 to 107 (VRAYLQDKLK…PVHINIEEIR (69 aa)) is the KH type-2 domain.

Belongs to the universal ribosomal protein uS3 family. Part of the 30S ribosomal subunit. Forms a tight complex with proteins S10 and S14.

In terms of biological role, binds the lower part of the 30S subunit head. Binds mRNA in the 70S ribosome, positioning it for translation. The chain is Small ribosomal subunit protein uS3 from Ectopseudomonas mendocina (strain ymp) (Pseudomonas mendocina).